Consider the following 294-residue polypeptide: 4-hydroxy-tetrahydrodipicolinate synthase (294 aa).

Thr45 contacts pyruvate. Tyr133 serves as the catalytic Proton donor/acceptor. Lys161 serves as the catalytic Schiff-base intermediate with substrate. Ile203 contributes to the pyruvate binding site.

The protein belongs to the DapA family. As to quaternary structure, homotetramer; dimer of dimers.

It is found in the cytoplasm. The enzyme catalyses L-aspartate 4-semialdehyde + pyruvate = (2S,4S)-4-hydroxy-2,3,4,5-tetrahydrodipicolinate + H2O + H(+). Its pathway is amino-acid biosynthesis; L-lysine biosynthesis via DAP pathway; (S)-tetrahydrodipicolinate from L-aspartate: step 3/4. In terms of biological role, catalyzes the condensation of (S)-aspartate-beta-semialdehyde [(S)-ASA] and pyruvate to 4-hydroxy-tetrahydrodipicolinate (HTPA). The polypeptide is 4-hydroxy-tetrahydrodipicolinate synthase (Buchnera aphidicola subsp. Schizaphis graminum (strain Sg)).